The sequence spans 133 residues: ATP synthase epsilon chain, chloroplastic (133 aa).

It belongs to the ATPase epsilon chain family. F-type ATPases have 2 components, CF(1) - the catalytic core - and CF(0) - the membrane proton channel. CF(1) has five subunits: alpha(3), beta(3), gamma(1), delta(1), epsilon(1). CF(0) has three main subunits: a, b and c.

The protein localises to the plastid. Its subcellular location is the chloroplast thylakoid membrane. Its function is as follows. Produces ATP from ADP in the presence of a proton gradient across the membrane. This chain is ATP synthase epsilon chain, chloroplastic, found in Morus indica (Mulberry).